A 195-amino-acid polypeptide reads, in one-letter code: Holliday junction branch migration complex subunit RuvA (195 aa).

Positions 1–61 (MYEYLDGVVV…ENDQTLYGFK (61 aa)) are domain I. The interval 62 to 139 (KAEDKELFLN…AVENEVGTLF (78 aa)) is domain II. The segment at 139–143 (FDLST) is flexible linker. The interval 144–195 (TSNQALDEALEALIALGYSEKEVKKLTKKLSEQTDRTTDQYISSGLKLLMKG) is domain III.

It belongs to the RuvA family. In terms of assembly, homotetramer. Forms an RuvA(8)-RuvB(12)-Holliday junction (HJ) complex. HJ DNA is sandwiched between 2 RuvA tetramers; dsDNA enters through RuvA and exits via RuvB. An RuvB hexamer assembles on each DNA strand where it exits the tetramer. Each RuvB hexamer is contacted by two RuvA subunits (via domain III) on 2 adjacent RuvB subunits; this complex drives branch migration. In the full resolvosome a probable DNA-RuvA(4)-RuvB(12)-RuvC(2) complex forms which resolves the HJ.

It localises to the cytoplasm. In terms of biological role, the RuvA-RuvB-RuvC complex processes Holliday junction (HJ) DNA during genetic recombination and DNA repair, while the RuvA-RuvB complex plays an important role in the rescue of blocked DNA replication forks via replication fork reversal (RFR). RuvA specifically binds to HJ cruciform DNA, conferring on it an open structure. The RuvB hexamer acts as an ATP-dependent pump, pulling dsDNA into and through the RuvAB complex. HJ branch migration allows RuvC to scan DNA until it finds its consensus sequence, where it cleaves and resolves the cruciform DNA. This chain is Holliday junction branch migration complex subunit RuvA, found in Pediococcus pentosaceus (strain ATCC 25745 / CCUG 21536 / LMG 10740 / 183-1w).